The following is a 269-amino-acid chain: 5'-nucleotidase SurE (269 aa).

Residues Asp-11, Asp-12, Ser-43, and Asn-101 each contribute to the a divalent metal cation site.

The protein belongs to the SurE nucleotidase family. It depends on a divalent metal cation as a cofactor.

Its subcellular location is the cytoplasm. The catalysed reaction is a ribonucleoside 5'-phosphate + H2O = a ribonucleoside + phosphate. In terms of biological role, nucleotidase that shows phosphatase activity on nucleoside 5'-monophosphates. The chain is 5'-nucleotidase SurE from Prochlorococcus marinus subsp. pastoris (strain CCMP1986 / NIES-2087 / MED4).